A 644-amino-acid polypeptide reads, in one-letter code: DNA mismatch repair protein MutL (644 aa).

Disordered stretches follow at residues 338–390 and 416–445; these read RPNA…ERPA and QPQE…DDTQ. Low complexity-rich tracts occupy residues 349–366 and 416–427; these read EATP…EASA and QPQEAAEEAAGT.

Belongs to the DNA mismatch repair MutL/HexB family.

In terms of biological role, this protein is involved in the repair of mismatches in DNA. It is required for dam-dependent methyl-directed DNA mismatch repair. May act as a 'molecular matchmaker', a protein that promotes the formation of a stable complex between two or more DNA-binding proteins in an ATP-dependent manner without itself being part of a final effector complex. The sequence is that of DNA mismatch repair protein MutL from Chromohalobacter salexigens (strain ATCC BAA-138 / DSM 3043 / CIP 106854 / NCIMB 13768 / 1H11).